A 1206-amino-acid polypeptide reads, in one-letter code: Pre-mRNA-splicing factor prp12 (1206 aa).

It belongs to the RSE1 family. In terms of assembly, belongs to the 40S cdc5-associated complex (or cwf complex), a spliceosome sub-complex reminiscent of a late-stage spliceosome composed of the U2, U5 and U6 snRNAs and at least brr2, cdc5, cwf2/prp3, cwf3/syf1, cwf4/syf3, cwf5/ecm2, spp42/cwf6, cwf7/spf27, cwf8, cwf9, cwf10, cwf11, cwf12, prp45/cwf13, cwf14, cwf15, cwf16, cwf17, cwf18, cwf19, cwf20, cwf21, cwf22, cwf23, cwf24, cwf25, cwf26, cyp7/cwf27, cwf28, cwf29/ist3, lea1, msl1, prp5/cwf1, prp10, prp12/sap130, prp17, prp22, sap61, sap62, sap114, sap145, slu7, smb1, smd1, smd3, smf1, smg1 and syf2.

The protein localises to the nucleus. Its function is as follows. Involved in mRNA splicing and G2/M transition. This is Pre-mRNA-splicing factor prp12 (prp12) from Schizosaccharomyces pombe (strain 972 / ATCC 24843) (Fission yeast).